Reading from the N-terminus, the 155-residue chain is D-aminoacyl-tRNA deacylase (155 aa).

Positions Gly147 to Pro148 match the Gly-cisPro motif, important for rejection of L-amino acids motif.

Belongs to the DTD family. In terms of assembly, homodimer.

Its subcellular location is the cytoplasm. The enzyme catalyses glycyl-tRNA(Ala) + H2O = tRNA(Ala) + glycine + H(+). The catalysed reaction is a D-aminoacyl-tRNA + H2O = a tRNA + a D-alpha-amino acid + H(+). An aminoacyl-tRNA editing enzyme that deacylates mischarged D-aminoacyl-tRNAs. Also deacylates mischarged glycyl-tRNA(Ala), protecting cells against glycine mischarging by AlaRS. Acts via tRNA-based rather than protein-based catalysis; rejects L-amino acids rather than detecting D-amino acids in the active site. By recycling D-aminoacyl-tRNA to D-amino acids and free tRNA molecules, this enzyme counteracts the toxicity associated with the formation of D-aminoacyl-tRNA entities in vivo and helps enforce protein L-homochirality. The chain is D-aminoacyl-tRNA deacylase from Corynebacterium urealyticum (strain ATCC 43042 / DSM 7109).